A 133-amino-acid polypeptide reads, in one-letter code: Small ribosomal subunit protein uS8 (133 aa).

It belongs to the universal ribosomal protein uS8 family. Part of the 30S ribosomal subunit. Contacts proteins S5 and S12.

In terms of biological role, one of the primary rRNA binding proteins, it binds directly to 16S rRNA central domain where it helps coordinate assembly of the platform of the 30S subunit. The protein is Small ribosomal subunit protein uS8 of Syntrophus aciditrophicus (strain SB).